Reading from the N-terminus, the 350-residue chain is Phenylalanine--tRNA ligase alpha subunit (350 aa).

Residue Glu-257 participates in Mg(2+) binding.

It belongs to the class-II aminoacyl-tRNA synthetase family. Phe-tRNA synthetase alpha subunit type 1 subfamily. In terms of assembly, tetramer of two alpha and two beta subunits. Mg(2+) is required as a cofactor.

Its subcellular location is the cytoplasm. The enzyme catalyses tRNA(Phe) + L-phenylalanine + ATP = L-phenylalanyl-tRNA(Phe) + AMP + diphosphate + H(+). The protein is Phenylalanine--tRNA ligase alpha subunit of Listeria monocytogenes serotype 4a (strain HCC23).